We begin with the raw amino-acid sequence, 530 residues long: Membrane protein insertase YidC (530 aa).

The next 4 helical transmembrane spans lie at 5-25, 348-368, 418-438, and 492-512; these read VVIAVILSIVVLYAFSYMFPP, YGLAIIIITIILKVLFFPLTH, LPMLVQIPVFFALYKALMFSI, and PVVFTFMFLNFPAGLVLYWLI.

Belongs to the OXA1/ALB3/YidC family. Type 1 subfamily. In terms of assembly, interacts with the Sec translocase complex via SecD. Specifically interacts with transmembrane segments of nascent integral membrane proteins during membrane integration.

It is found in the cell inner membrane. In terms of biological role, required for the insertion and/or proper folding and/or complex formation of integral membrane proteins into the membrane. Involved in integration of membrane proteins that insert both dependently and independently of the Sec translocase complex, as well as at least some lipoproteins. Aids folding of multispanning membrane proteins. The chain is Membrane protein insertase YidC from Geotalea daltonii (strain DSM 22248 / JCM 15807 / FRC-32) (Geobacter daltonii).